A 160-amino-acid chain; its full sequence is Thialysine N-epsilon-acetyltransferase (160 aa).

The N-acetyltransferase domain occupies 4 to 159; that stretch reads FEIVTVTPDH…DGAAINKFAD (156 aa). Acetyl-CoA is bound by residues 84 to 86, 92 to 97, 123 to 126, and 130 to 133; these read LYI, RMGLAR, NKNA, and YDTV.

This sequence belongs to the acetyltransferase family. As to quaternary structure, homodimer.

The catalysed reaction is S-(2-aminoethyl)-L-cysteine + acetyl-CoA = S-(2-acetamidoethyl)-L-cysteine + CoA + H(+). The enzyme catalyses O-(2-aminoethyl)-L-serine + acetyl-CoA = O-(2-acetamidoethyl)-L-serine + CoA + H(+). It catalyses the reaction S-(2-aminoethyl)-homocysteine + acetyl-CoA = S-(2-acetamidoethyl)-homocysteine + CoA + H(+). Functionally, catalyzes the N-acetylation of the amino acid thialysine (S-(2-aminoethyl)-L-cysteine), a L-lysine analog with the 4-methylene group substituted with a sulfur. Substrate specificity: thialysine &gt; O-(2-aminoethyl)-L-serine &gt; S-(2-aminoethyl)-D,L-homocysteine. Does not act on polyamines, such as spermidine and spermine, nor on diamines putrescine and cadaverine. The sequence is that of Thialysine N-epsilon-acetyltransferase from Caenorhabditis elegans.